The chain runs to 120 residues: Large ribosomal subunit protein uL18 (120 aa).

The span at 1-20 (MKSTRKSATQRRHRRLRRHL) shows a compositional bias: basic residues. A disordered region spans residues 1 to 26 (MKSTRKSATQRRHRRLRRHLSGTSER).

This sequence belongs to the universal ribosomal protein uL18 family. Part of the 50S ribosomal subunit; part of the 5S rRNA/L5/L18/L25 subcomplex. Contacts the 5S and 23S rRNAs.

Its function is as follows. This is one of the proteins that bind and probably mediate the attachment of the 5S RNA into the large ribosomal subunit, where it forms part of the central protuberance. The polypeptide is Large ribosomal subunit protein uL18 (Synechocystis sp. (strain ATCC 27184 / PCC 6803 / Kazusa)).